Here is a 419-residue protein sequence, read N- to C-terminus: Hydrolase LUC6 (419 aa).

The active site involves S238.

The protein belongs to the AB hydrolase superfamily. FUS2 hydrolase family.

It participates in mycotoxin biosynthesis. Functionally, hydrolase; part of the gene cluster that mediates the biosynthesis of the mycotoxin lucilactaene and the lucilactaene-related compound NG-391 that act as cell cycle inhibitors with potent growth inhibitory activity against malarial parasites, moderate growth inhibitory activity against cancer cells, and no activity against bacteria and fungi. Within the pathway, LUC6 may catalyze the 2-pyrrolidone ring formation to form prelucilactaene C from prelucilactaene B, followed by C-15 hydroxylation by the same enzyme to give prelucilactaene D, epoxydation to yield prelucilactaene E, and finally cyclization to yield prelucilactaene F. The pathway begins with the hybrid PKS-NRPS synthetase LUC5 which is responsible for the condensation of one acetyl-coenzyme A (CoA) unit with six malonyl-CoA units and the amide linkage of the arising heptaketide and homoserine, subsequently releasing the first intermediate prelucilactaene B. Both the cytochrome P450 monooxygenase LUC2 and the hydrolase LUC6 function in parallel in modification of prelucilactaene B. LUC6 may catalyze the 2-pyrrolidone ring formation to form prelucilactaene C from prelucilactaene B, followed by C-15 hydroxylation by the same enzyme to give prelucilactaene D, which is then converted to prelucilactaene E by epoxidation, and finally to prelucilactaene F by cyclization. Prelucilactane D, prelucilactaene E, and prelucilactaene F can be converted to dihydrolucilactaene, NG391, and lucilactaene, respectively, via C-20 methyl group hydroxylation by the cytochrome P450 monooxygenase LUC2. However, LUC2, unlike FUS8 in fusarin C biosynthesis, is not enough for the full oxidation of the C-20 methyl group into carboxylic acid, which is a prerequisite for the final methylation step. The aldehyde dehydrogenase LUC3 is involved in the biosynthesis by further oxidation of the C-20 alcoholic analog prelucilactaene G into a carboxylic derivative. This unidentified carboxylic derivative may be converted to demethyllucilactaene. As the last step, the methyltransferase LUC1 methylates the hydroxyl group at C-21 of demethyllucilactaene to generate lucilactaene. This is Hydrolase LUC6 from Fusarium sp.